Reading from the N-terminus, the 3375-residue chain is Basement membrane proteoglycan (3375 aa).

Residues 1–22 form the signal peptide; it reads MKRSSTVLAALLALLLVATNDA. Residues 45-130 enclose the Ig-like C2-type 1 domain; that stretch reads VQITVFPSEK…NTVEARATLS (86 aa). 11 disulfide bridges follow: C66–C114, C149–C161, C156–C174, C168–C183, C190–C202, C197–C215, C209–C224, C233–C246, C240–C259, C253–C268, and C293–C344. LDL-receptor class A domains lie at 148–184, 189–225, and 232–269; these read QCMA…ANCP, TCEP…LNCN, and DCKP…VGCV. An Ig-like C2-type 2 domain is found at 271–355; it reads PTVVDPPQTN…AINVKGRVLA (85 aa). Residues 364 to 385 are disordered; the sequence is VDDPRPQPPQPPTAPPQRASCD. A compositionally biased stretch (pro residues) spans 369 to 378; that stretch reads PQPPQPPTAP. Intrachain disulfides connect C384–C400, C402–C411, and C414–C429. In terms of domain architecture, Laminin EGF-like 1; truncated spans 384-431; that stretch reads CDTRGAVTPYPNNYGTCECKSQVTGPNCDQCKPGAFHLSEKSPEGCLK. The 10-residue stretch at 432-441 folds into the Laminin EGF-like 2; first part domain; it reads CFCFGVSNDC. Residues 450 to 633 enclose the Laminin IV type A 1 domain; sequence KDRLMFAGDA…PDGLALEVEQ (184 aa). 4 disulfides stabilise this stretch: C634–C648, C636–C689, C691–C700, and C703–C718. The Laminin EGF-like 2; second part domain maps to 634 to 666; it reads CVCPPGYLGTSCEDCAPGYERSGYGPYLGTCVP. One can recognise a Laminin EGF-like 3; truncated domain in the interval 674 to 720; it reads CGPGAVAPTAPAQGQCQCKASVIGPNCDRCAPNSFGLAPTNPQGCIP. Residues 721–730 form the Laminin EGF-like 4; first part domain; the sequence is CFCSGVTQQC. The region spanning 740–921 is the Laminin IV type A 2 domain; that stretch reads VSIDYARGDR…QGLTAAEVEQ (182 aa). The region spanning 922 to 954 is the Laminin EGF-like 4; second part domain; it reads CICPPGYVGTSCEDCAPGYSRTGGGLYLGLCEK. Disulfide bonds link C955-C964, C957-C971, C974-C983, C986-C1002, C1011-C1021, C1013-C1027, C1030-C1039, C1042-C1058, C1061-C1069, C1063-C1079, C1082-C1091, C1094-C1109, C1152-C1200, C1247-C1294, and C1338-C1384. Laminin EGF-like domains are found at residues 955 to 1004, 1011 to 1060, and 1061 to 1111; these read CECN…DCQP, CHCN…DCTP, and CPCP…VCEP. 15 consecutive Ig-like C2-type domains span residues 1126–1222, 1226–1311, 1319–1401, 1410–1499, 1503–1585, 1588–1680, 1690–1785, 1793–1878, 1886–1970, 1973–2069, 2073–2163, 2173–2260, 2263–2343, 2349–2435, and 2446–2530; these read PHEV…KRIS, PQPV…AVLE, PKVD…EPVQ, PQRG…ARLN, PQAI…RPVE, PARV…TPAT, PQVE…STLN, PRPV…VRLE, PTAV…GNVN, PSLT…IYIE, PSRI…AVHV, PKVE…TAVS, QQDK…GFVT, PDTI…RTVL, and TFTV…VDLQ. Polar residues predominate over residues 1388 to 1400; it reads DPSDNTPLQSEPV. Disordered regions lie at residues 1388–1426 and 1478–1497; these read DPSD…QTVN and EYEC…PPAR. A glycan (N-linked (GlcNAc...) asparagine) is linked at N1422. Intrachain disulfides connect C1435–C1481, C1527–C1573, C1618–C1663, and C1719–C1767. Residues 1481-1497 are compositionally biased toward polar residues; sequence CTSTEPDGSTQLSPPAR. The interval 1773 to 1792 is disordered; the sequence is NSPPVKTNPSTLNVTPEGTP. Over residues 1776–1788 the composition is skewed to polar residues; the sequence is PVKTNPSTLNVTP. Cystine bridges form between C1814–C1861, C1907–C1954, C1998–C2053, C2099–C2147, C2195–C2242, C2284–C2329, C2374–C2420, C2467–C2514, C2713–C2725, C2719–C2736, C2738–C2747, C2754–C2764, C2759–C2773, C2775–C2784, and C2935–C2960. A disordered region spans residues 1880–1918; sequence TEDQEPPTAVVEPRTWNGKPGERHQFRCITTGSPTPKIT. Residues 1907 to 1918 show a composition bias toward polar residues; that stretch reads CITTGSPTPKIT. N2476 carries an N-linked (GlcNAc...) asparagine glycan. The region spanning 2532–2713 is the Laminin G-like 1 domain; the sequence is DDFIPVIDGE…PSSVVKYDAC (182 aa). Positions 2793-2960 constitute a Laminin G-like 2 domain; the sequence is PLGFTSDTSF…LSSSGDISSC (168 aa). The N-linked (GlcNAc...) asparagine glycan is linked to N2950. The segment covering 2952–2963 has biased composition (low complexity); the sequence is SSSGDISSCEES. Residues 2952–3124 are disordered; sequence SSSGDISSCE…GTLPPDSSSE (173 aa). 2 stretches are compositionally biased toward acidic residues: residues 2979–2990 and 2999–3010; these read EEPEAVIEEPTT and PITEEPTEEPTT. Over residues 3011–3033 the composition is skewed to low complexity; that stretch reads TEEPTTTEEPTTTTEEPTTTTTE. Residues 3034–3044 show a composition bias toward basic and acidic residues; the sequence is EPYHIYETSRD. Residues 3049–3079 are compositionally biased toward low complexity; that stretch reads IIIPVETTTTSTTTTSTTEEPEAEPALVLPT. The segment covering 3081–3094 has biased composition (acidic residues); sequence PVEENDVSDEEEEI. Disulfide bonds link C3141–C3152, C3146–C3162, C3164–C3173, and C3333–C3359. Residues N3143 and N3156 are each glycosylated (N-linked (GlcNAc...) asparagine). The 180-residue stretch at 3180 to 3359 folds into the Laminin G-like 3 domain; that stretch reads EHAARFDGDA…AIDGKNVKPC (180 aa).

In terms of assembly, component of an integrin containing attachment complex, composed of at least pat-2, pat-3, pat-4, pat-6, unc-52, unc-97 and unc-112. Detected on embryonic and adult body wall muscle cells (at protein level). Found in the basement membrane of all contractile tissues (at protein level). Expressed in gonadal sheath cells and spermatheca.

It is found in the secreted. The protein resides in the extracellular space. The protein localises to the extracellular matrix. It localises to the basement membrane. Its subcellular location is the cytoplasm. It is found in the myofibril. The protein resides in the sarcomere. The protein localises to the m line. Its function is as follows. Component of an integrin containing attachment complex, which is required for muscle development and maintenance. Probable structural role in myofilament assembly and/or attachment of the myofilament lattice to the cell membrane. May be an extracellular anchor for integrin receptors in body wall muscles and myoepithelial sheath cells. During the formation of neuromuscular junctions at the larval stage, negatively regulates membrane protrusion from body wall muscles, probably downstream of the integrin complex formed by pat-2 and pat-3. Involved in ovulation. Required for normal lifespan. The sequence is that of Basement membrane proteoglycan from Caenorhabditis elegans.